We begin with the raw amino-acid sequence, 89 residues long: Small ribosomal subunit protein uS15 (89 aa).

The protein belongs to the universal ribosomal protein uS15 family. As to quaternary structure, part of the 30S ribosomal subunit. Forms a bridge to the 50S subunit in the 70S ribosome, contacting the 23S rRNA.

Its function is as follows. One of the primary rRNA binding proteins, it binds directly to 16S rRNA where it helps nucleate assembly of the platform of the 30S subunit by binding and bridging several RNA helices of the 16S rRNA. Forms an intersubunit bridge (bridge B4) with the 23S rRNA of the 50S subunit in the ribosome. In Chlamydia felis (strain Fe/C-56) (Chlamydophila felis), this protein is Small ribosomal subunit protein uS15.